We begin with the raw amino-acid sequence, 290 residues long: Phosphatidylglycerol--prolipoprotein diacylglyceryl transferase (290 aa).

A run of 7 helical transmembrane segments spans residues 21–41, 60–80, 96–116, 124–144, 199–219, 226–246, and 259–279; these read VSLH…MWLA, LLYA…VLFY, WDGG…MLWF, FFQV…AGRL, SQLY…NLFI, GSVS…VECF, and VISM…IMMI. Arg143 is an a 1,2-diacyl-sn-glycero-3-phospho-(1'-sn-glycerol) binding site.

Belongs to the Lgt family.

It is found in the cell inner membrane. It carries out the reaction L-cysteinyl-[prolipoprotein] + a 1,2-diacyl-sn-glycero-3-phospho-(1'-sn-glycerol) = an S-1,2-diacyl-sn-glyceryl-L-cysteinyl-[prolipoprotein] + sn-glycerol 1-phosphate + H(+). It participates in protein modification; lipoprotein biosynthesis (diacylglyceryl transfer). Catalyzes the transfer of the diacylglyceryl group from phosphatidylglycerol to the sulfhydryl group of the N-terminal cysteine of a prolipoprotein, the first step in the formation of mature lipoproteins. This Yersinia enterocolitica serotype O:8 / biotype 1B (strain NCTC 13174 / 8081) protein is Phosphatidylglycerol--prolipoprotein diacylglyceryl transferase.